Reading from the N-terminus, the 247-residue chain is Large ribosomal subunit protein uL30 (247 aa).

An N-acetylmethionine modification is found at methionine 1. A run of 4 repeats spans residues 7-17 (KKKVPAVPETL), 18-29 (KKKRRNFAELKI), 30-41 (KRLRKKFAQKML), and 42-53 (RKARRKLIYEKA). Positions 7–53 (KKKVPAVPETLKKKRRNFAELKIKRLRKKFAQKMLRKARRKLIYEKA) are 4 X 12 AA tandem repeats. Phosphothreonine is present on threonine 16. Lysine 123 is subject to N6-acetyllysine. At lysine 126 the chain carries N6-succinyllysine. Residue tyrosine 138 is modified to Phosphotyrosine.

It belongs to the universal ribosomal protein uL30 family. As to quaternary structure, component of the large ribosomal subunit. Homodimer. Interacts with DHX33.

Its subcellular location is the cytoplasm. Its function is as follows. Component of the large ribosomal subunit. The ribosome is a large ribonucleoprotein complex responsible for the synthesis of proteins in the cell. Binds to G-rich structures in 28S rRNA and in mRNAs. Plays a regulatory role in the translation apparatus; inhibits cell-free translation of mRNAs. This is Large ribosomal subunit protein uL30 (RPL7) from Macaca fascicularis (Crab-eating macaque).